The primary structure comprises 541 residues: MASMGTLAFDEYGRPFLIIKDQDRKSRLMGLEALKSHIMAAKAVANTMRTSLGPNGLDKMMVDKDGDVTVTNDGATILSMMDVDHQIAKLMVELSKSQDDEIGDGTTGVVVLAGALLEEAEQLLDRGIHPIRIADGYEQAARVAIEHLDKISDSVLVDIKDTEPLIQTAKTTLGSKVVNSCHRQMAEIAVNAVLTVADMERRDVDFELIKVEGKVGGRLEDTKLIKGVIVDKDFSHPQMPKKVEDAKIAILTCPFEPPKPKTKHKLDVTSVEDYKALQKYEKEKFEEMIQQIKETGANLAICQWGFDDEANHLLLQNNLPAVRWVGGPEIELIAIATGGRIVPRFSELTAEKLGFAGLVQEISFGTTKDKMLVIEQCKNSRAVTIFIRGGNKMIIEEAKRSLHDALCVIRNLIRDNRVVYGGGAAEISCALAVSQEADKCPTLEQYAMRAFADALEVIPMALSENSGMNPIQTMTEVRARQVKEMNPALGIDCLHKGTNDMKQQHVIETLIGKKQQISLATQMVRMILKIDDIRKPGESEE.

Residue Ala-2 is modified to N-acetylalanine. Lys-20 participates in a covalent cross-link: Glycyl lysine isopeptide (Lys-Gly) (interchain with G-Cter in SUMO2). Position 26 is a phosphoserine (Ser-26). ADP is bound at residue Gly-53. Gly-53 contacts ATP. Asp-104 is a Mg(2+) binding site. Positions 105, 106, 107, and 175 each coordinate ADP. The ATP site is built by Thr-106 and Thr-107. Glycyl lysine isopeptide (Lys-Gly) (interchain with G-Cter in SUMO2) cross-links involve residues Lys-210, Lys-214, Lys-265, Lys-275, and Lys-279. Residue Ser-346 is modified to Phosphoserine. Residue Lys-392 forms a Glycyl lysine isopeptide (Lys-Gly) (interchain with G-Cter in SUMO2) linkage. 4 residues coordinate ADP: Gly-422, Asp-492, Glu-508, and Lys-513. Residue Gly-422 coordinates ATP. The residue at position 539 (Ser-539) is a Phosphoserine.

This sequence belongs to the TCP-1 chaperonin family. In terms of assembly, component of the chaperonin-containing T-complex (TRiC), a hexadecamer composed of two identical back-to-back stacked rings enclosing a protein folding chamber. Each ring is made up of eight different subunits: TCP1/CCT1, CCT2, CCT3, CCT4, CCT5, CCT6A/CCT6, CCT7, CCT8. Interacts with PACRG. Interacts with DNAAF4. Interacts with DLEC1. Interacts with SPMAP2. Post-translationally, ubiquitinated by the DCX(DCAF12) complex specifically recognizes the diglutamate (Glu-Glu) at the C-terminus, leading to its degradation.

Its subcellular location is the cytoplasm. The protein resides in the cytoskeleton. It localises to the microtubule organizing center. It is found in the centrosome. It carries out the reaction ATP + H2O = ADP + phosphate + H(+). Functionally, component of the chaperonin-containing T-complex (TRiC), a molecular chaperone complex that assists the folding of actin, tubulin and other proteins upon ATP hydrolysis. The TRiC complex mediates the folding of WRAP53/TCAB1, thereby regulating telomere maintenance. As part of the TRiC complex may play a role in the assembly of BBSome, a complex involved in ciliogenesis regulating transports vesicles to the cilia. This Homo sapiens (Human) protein is T-complex protein 1 subunit epsilon (CCT5).